Reading from the N-terminus, the 216-residue chain is Adenylate kinase (216 aa).

Residue 10-15 (GAGKGT) participates in ATP binding. An NMP region spans residues 30 to 59 (STGDMFRAAMKAETEMGLQAKSFIDKGALV). AMP-binding positions include Thr31, Arg36, 57-59 (ALV), 85-88 (GFPR), and Gln92. An LID region spans residues 126 to 163 (GRRICKECGATYHLEFNPPAKADVCDKCGGELYQRSDD). ATP is bound at residue Arg127. Zn(2+) contacts are provided by Cys130 and Cys133. Residue 136 to 137 (TY) coordinates ATP. Zn(2+) contacts are provided by Cys150 and Cys153. 2 residues coordinate AMP: Arg160 and Arg171. ATP is bound at residue Gln199.

Belongs to the adenylate kinase family. As to quaternary structure, monomer.

Its subcellular location is the cytoplasm. It catalyses the reaction AMP + ATP = 2 ADP. The protein operates within purine metabolism; AMP biosynthesis via salvage pathway; AMP from ADP: step 1/1. Functionally, catalyzes the reversible transfer of the terminal phosphate group between ATP and AMP. Plays an important role in cellular energy homeostasis and in adenine nucleotide metabolism. The polypeptide is Adenylate kinase (Bacillus cereus (strain B4264)).